The sequence spans 460 residues: Cysteine--tRNA ligase (460 aa).

Cys28 provides a ligand contact to Zn(2+). Residues 30 to 40 (MTVYDYCHLGH) carry the 'HIGH' region motif. Zn(2+) contacts are provided by Cys209, His234, and Glu238. Residues 266–270 (KMSKS) carry the 'KMSKS' region motif. Lys269 contributes to the ATP binding site.

It belongs to the class-I aminoacyl-tRNA synthetase family. As to quaternary structure, monomer. Requires Zn(2+) as cofactor.

It localises to the cytoplasm. It carries out the reaction tRNA(Cys) + L-cysteine + ATP = L-cysteinyl-tRNA(Cys) + AMP + diphosphate. The polypeptide is Cysteine--tRNA ligase (Thioalkalivibrio sulfidiphilus (strain HL-EbGR7)).